The chain runs to 75 residues: Exodeoxyribonuclease 7 small subunit (75 aa).

The protein belongs to the XseB family. As to quaternary structure, heterooligomer composed of large and small subunits.

It localises to the cytoplasm. It carries out the reaction Exonucleolytic cleavage in either 5'- to 3'- or 3'- to 5'-direction to yield nucleoside 5'-phosphates.. In terms of biological role, bidirectionally degrades single-stranded DNA into large acid-insoluble oligonucleotides, which are then degraded further into small acid-soluble oligonucleotides. This chain is Exodeoxyribonuclease 7 small subunit, found in Pelobacter propionicus (strain DSM 2379 / NBRC 103807 / OttBd1).